The sequence spans 607 residues: CUB and zona pellucida-like domain-containing protein 1 (607 aa).

The signal sequence occupies residues 1-19 (MEVTGRLFIWAILAVSCGA). Residues cysteine 17 and cysteine 58 are joined by a disulfide bond. CUB domains are found at residues 20–146 (QLNS…YFFS) and 154–265 (CGGD…YTSI). Residues 20–568 (QLNSTEAEGK…AEISNQPLSR (549 aa)) lie on the Lumenal side of the membrane. N-linked (GlcNAc...) asparagine glycosylation is found at asparagine 22, asparagine 57, and asparagine 67. Intrachain disulfides connect cysteine 85/cysteine 107, cysteine 154/cysteine 180, and cysteine 207/cysteine 229. One can recognise a ZP domain in the interval 276–519 (SCVSDKMRVI…SRCNQGCVPR (244 aa)). Asparagine 419 is a glycosylation site (N-linked (GlcNAc...) asparagine). The cysteines at positions 442 and 498 are disulfide-linked. Residues 569-589 (LYLFSFMVLALNVVIVAITTV) traverse the membrane as a helical segment. The Cytoplasmic segment spans residues 590 to 607 (KHFLNRWMDHRYQKLQVY).

As to expression, highly expressed in pancreatic acinar cells. Also expressed in epithelium of the uterus during late pregnancy but not detected in non-pregnant uterus or in a variety of other adult and fetal tissues.

Its subcellular location is the zymogen granule membrane. Functionally, localized to zymogen granules, where it functions in trypsinogen activation. May indirectly regulate cell motility, cell-cell and cell/extracellular matrix interactions. This Mus musculus (Mouse) protein is CUB and zona pellucida-like domain-containing protein 1.